The primary structure comprises 146 residues: UPF0742 protein PB2B2.17c (146 aa).

Residues 38–60 traverse the membrane as a helical segment; it reads LTVKYCLAVKLLIYLLYCWYIYS.

It belongs to the UPF0742 family.

It is found in the cytoplasm. The protein localises to the nucleus membrane. In Schizosaccharomyces pombe (strain 972 / ATCC 24843) (Fission yeast), this protein is UPF0742 protein PB2B2.17c.